A 564-amino-acid polypeptide reads, in one-letter code: MFS-type efflux pump LUC4 (564 aa).

Positions 1-15 (MGQSQDNTQLTTASP) are enriched in polar residues. The disordered stretch occupies residues 1-35 (MGQSQDNTQLTTASPQAEKDLSSNDNPPESEPAAP). 5 consecutive transmembrane segments (helical) span residues 42 to 62 (WLVF…TSII), 78 to 98 (LYVW…PIFA), 108 to 128 (SLTL…GGAH), 141 to 161 (GVGG…MVSV), and 170 to 190 (IIGG…GAFA). N192 carries N-linked (GlcNAc...) asparagine glycosylation. The next 3 helical transmembrane spans lie at 197–217 (WIFY…IVFL), 236–256 (WGGS…LSWG), and 268–288 (LVPL…QGAP). Residue N302 is glycosylated (N-linked (GlcNAc...) asparagine). The next 5 helical transmembrane spans lie at 308 to 328 (LFVI…FLPV), 343 to 363 (VMLF…GIFI), 371 to 391 (VWHF…TLLD), 404 to 424 (LLFG…ILAS), and 436 to 456 (AWTF…AAAF). N461 carries an N-linked (GlcNAc...) asparagine glycan. A helical membrane pass occupies residues 512-532 (KLVWQVSIAFSVLGFVLAFLV).

It belongs to the major facilitator superfamily. TCR/Tet family.

It localises to the membrane. MFS-type efflux pump; part of the gene cluster that mediates the biosynthesis of the mycotoxin lucilactaene and the lucilactaene-related compound NG-391 that act as cell cycle inhibitors with potent growth inhibitory activity against malarial parasites, moderate growth inhibitory activity against cancer cells, and no activity against bacteria and fungi. The chain is MFS-type efflux pump LUC4 from Fusarium sp.